A 382-amino-acid polypeptide reads, in one-letter code: Pyrimidine monooxygenase RutA (382 aa).

FMN contacts are provided by residues 68–69 (IK), asparagine 134, glutamate 143, 159–160 (RY), and serine 209.

Belongs to the NtaA/SnaA/DszA monooxygenase family. RutA subfamily.

It carries out the reaction uracil + FMNH2 + NADH + O2 = (Z)-3-ureidoacrylate + FMN + NAD(+) + H2O + H(+). The catalysed reaction is thymine + FMNH2 + NADH + O2 = (Z)-2-methylureidoacrylate + FMN + NAD(+) + H2O + H(+). In terms of biological role, catalyzes the pyrimidine ring opening between N-3 and C-4 by an unusual flavin hydroperoxide-catalyzed mechanism, adding oxygen atoms in the process to yield ureidoacrylate peracid, that immediately reacts with FMN forming ureidoacrylate and FMN-N(5)-oxide. The FMN-N(5)-oxide reacts spontaneously with NADH to produce FMN. Requires the flavin reductase RutF to regenerate FMN in vivo. This Escherichia coli O157:H7 protein is Pyrimidine monooxygenase RutA (rutA).